A 418-amino-acid polypeptide reads, in one-letter code: MENIRTLAEVDPEIARVLREETQRQEEGLELIASENFVSPAVMEAVGSVLTNKYAEGYPGKRYYGGCEVVDVAENLAIARAKDLFGADAVNVQAHSGSQANMGAFMALMKPGDTMLSLDLNSGGHLTHGATFNFSGKLYKVVHYGLTRDTETIDFAQVESLAKEHKPKVIVVGASAYPRTLDFAKFREIADAVGAAMLVDMAHIAGLVAAGVHPSPVPVADIVTSTTHKTLRGPRGGLVLSREPYAKAINSQIFPGIQGGPLMHVIAGKAVAFKEALSPEFKAYQRQIVANAKALAEALQRAGLRLTSGGTDNHLMLVDLRPKKLTGKVAEEVLDKAGITVNKNMIPFDPEKPMTTSGVRVGTPAITTRGMREAEMAVVGRLIGEALDAAQDDAALARIKGQVKELSQGFPLYASRLK.

(6S)-5,6,7,8-tetrahydrofolate-binding positions include Leu120 and 124-126 (GHL). Lys229 carries the N6-(pyridoxal phosphate)lysine modification.

The protein belongs to the SHMT family. In terms of assembly, homodimer. Pyridoxal 5'-phosphate is required as a cofactor.

It localises to the cytoplasm. The enzyme catalyses (6R)-5,10-methylene-5,6,7,8-tetrahydrofolate + glycine + H2O = (6S)-5,6,7,8-tetrahydrofolate + L-serine. It participates in one-carbon metabolism; tetrahydrofolate interconversion. Its pathway is amino-acid biosynthesis; glycine biosynthesis; glycine from L-serine: step 1/1. Catalyzes the reversible interconversion of serine and glycine with tetrahydrofolate (THF) serving as the one-carbon carrier. This reaction serves as the major source of one-carbon groups required for the biosynthesis of purines, thymidylate, methionine, and other important biomolecules. Also exhibits THF-independent aldolase activity toward beta-hydroxyamino acids, producing glycine and aldehydes, via a retro-aldol mechanism. This is Serine hydroxymethyltransferase from Myxococcus xanthus (strain DK1622).